The primary structure comprises 227 residues: UPF0173 metal-dependent hydrolase BCAH820_4729 (227 aa).

This sequence belongs to the UPF0173 family.

In Bacillus cereus (strain AH820), this protein is UPF0173 metal-dependent hydrolase BCAH820_4729.